A 122-amino-acid chain; its full sequence is UPF0102 protein Mpe_A3766 (122 aa).

The protein belongs to the UPF0102 family.

The sequence is that of UPF0102 protein Mpe_A3766 from Methylibium petroleiphilum (strain ATCC BAA-1232 / LMG 22953 / PM1).